A 503-amino-acid polypeptide reads, in one-letter code: Probable cytosol aminopeptidase (503 aa).

Residues K270 and D275 each contribute to the Mn(2+) site. Residue K282 is part of the active site. 3 residues coordinate Mn(2+): D293, D352, and E354. Residue R356 is part of the active site.

The protein belongs to the peptidase M17 family. Mn(2+) is required as a cofactor.

The protein resides in the cytoplasm. It carries out the reaction Release of an N-terminal amino acid, Xaa-|-Yaa-, in which Xaa is preferably Leu, but may be other amino acids including Pro although not Arg or Lys, and Yaa may be Pro. Amino acid amides and methyl esters are also readily hydrolyzed, but rates on arylamides are exceedingly low.. It catalyses the reaction Release of an N-terminal amino acid, preferentially leucine, but not glutamic or aspartic acids.. Presumably involved in the processing and regular turnover of intracellular proteins. Catalyzes the removal of unsubstituted N-terminal amino acids from various peptides. This is Probable cytosol aminopeptidase from Shigella boydii serotype 4 (strain Sb227).